A 343-amino-acid polypeptide reads, in one-letter code: D-erythrose-4-phosphate dehydrogenase (343 aa).

12–13 (RI) lines the NAD(+) pocket. Substrate-binding positions include 154–156 (SCT), R200, 213–214 (TK), and R236. C155 functions as the Nucleophile in the catalytic mechanism. N318 contributes to the NAD(+) binding site.

Belongs to the glyceraldehyde-3-phosphate dehydrogenase family. Epd subfamily. In terms of assembly, homotetramer.

It is found in the cytoplasm. The enzyme catalyses D-erythrose 4-phosphate + NAD(+) + H2O = 4-phospho-D-erythronate + NADH + 2 H(+). It participates in cofactor biosynthesis; pyridoxine 5'-phosphate biosynthesis; pyridoxine 5'-phosphate from D-erythrose 4-phosphate: step 1/5. In terms of biological role, catalyzes the NAD-dependent conversion of D-erythrose 4-phosphate to 4-phosphoerythronate. The sequence is that of D-erythrose-4-phosphate dehydrogenase from Pseudoalteromonas translucida (strain TAC 125).